The chain runs to 149 residues: Large ribosomal subunit protein bL9 (149 aa).

The protein belongs to the bacterial ribosomal protein bL9 family.

Binds to the 23S rRNA. This is Large ribosomal subunit protein bL9 from Endomicrobium trichonymphae.